We begin with the raw amino-acid sequence, 327 residues long: Pyruvate dehydrogenase E1 component subunit beta (327 aa).

Glu63 serves as a coordination point for thiamine diphosphate.

In terms of assembly, heterodimer of an alpha and a beta chain. Thiamine diphosphate serves as cofactor.

It catalyses the reaction N(6)-[(R)-lipoyl]-L-lysyl-[protein] + pyruvate + H(+) = N(6)-[(R)-S(8)-acetyldihydrolipoyl]-L-lysyl-[protein] + CO2. Functionally, the pyruvate dehydrogenase complex catalyzes the overall conversion of pyruvate to acetyl-CoA and CO(2). It contains multiple copies of three enzymatic components: pyruvate dehydrogenase (E1), dihydrolipoamide acetyltransferase (E2) and lipoamide dehydrogenase (E3). The polypeptide is Pyruvate dehydrogenase E1 component subunit beta (pdhB) (Mycoplasma pneumoniae (strain ATCC 29342 / M129 / Subtype 1) (Mycoplasmoides pneumoniae)).